The sequence spans 526 residues: Efflux pump aunC (526 aa).

14 consecutive transmembrane segments (helical) span residues 23–43, 64–84, 89–109, 125–145, 155–175, 183–203, 218–238, 254–274, 296–316, 339–359, 360–380, 386–406, 418–438, and 491–511; these read LCYKLVLVTVGLCFCIFCTSL, DVGWYASAYLLTTCAVTLPFG, FFPIKWVYLSALFVFELGSFI, VAGLGGGGLFSGSLLIITQCV, GFIMSIFAVASVIAPLMGGAF, WCFYINLPFGLVSAVVIFFTF, AAGLDPLGTATFLPAIVCLLL, IIALFTLFGVLLACFVGLQLW, LYGFCLNGAMFTFVYYLPIWF, VIFAIISGVLVSATGYFGPFM, LLSAAMASIAAGLLSMLHPSS, IGYQVLLGSSIGMGFQLPVFV, TATALMTFIQLLGGAIFVSVA, and VHTFYLAIGLAAASFLAATVI.

It belongs to the major facilitator superfamily. TCR/Tet family.

The protein resides in the cell membrane. Its function is as follows. Efflux pump; part of the gene cluster that mediates the biosynthesis of aurasperone B, a dimeric gamma-naphthopyrone. The chain is Efflux pump aunC from Aspergillus niger (strain ATCC 1015 / CBS 113.46 / FGSC A1144 / LSHB Ac4 / NCTC 3858a / NRRL 328 / USDA 3528.7).